The primary structure comprises 203 residues: Glycerol-3-phosphate acyltransferase (203 aa).

The next 6 helical transmembrane spans lie at Ile3–Ser23, Lys51–Val71, Phe74–Leu94, Ala116–Phe136, Ser140–Thr160, and Pro164–Trp178.

This sequence belongs to the PlsY family. In terms of assembly, probably interacts with PlsX.

The protein resides in the cell inner membrane. It catalyses the reaction an acyl phosphate + sn-glycerol 3-phosphate = a 1-acyl-sn-glycero-3-phosphate + phosphate. Its pathway is lipid metabolism; phospholipid metabolism. Catalyzes the transfer of an acyl group from acyl-phosphate (acyl-PO(4)) to glycerol-3-phosphate (G3P) to form lysophosphatidic acid (LPA). This enzyme utilizes acyl-phosphate as fatty acyl donor, but not acyl-CoA or acyl-ACP. The sequence is that of Glycerol-3-phosphate acyltransferase from Burkholderia mallei (strain ATCC 23344).